The primary structure comprises 541 residues: MELTLWTYEGPPHVGAMRIAASMKGVHYVLHAPQGDTYADLLFTMIERRGKRPPVTYTTFQARDLGGDTAELVKRHIREAVERFKPDALLVGESCTAELIQDQPGALAGGMGFDLPIVSLELPAYSKKENWGASETLYQLVRGLLKNQEINSEGHNPKAWQNQGRRPRVNLIGPSLLGFRCRDDVIEISRLLASHGIDVNTVVPLEATVADVMRLTEADLNICLYAEISESCCSWMERQFGMPFSRTMPIGVGATADFLAEVHGLLGMDPPDPREGEHSSKLPWYSASVDSTYLTGKRVFIFGDGSHVLAAARIANEELGFQVVGLGTYSREMARPVRAAAKELGLEALISDDYLAVEAAMAEAVPELVLGTQMERHSAKRLGIPCAVISTPMHVQDVPARFSPQMGWEGANVIFDSWVHPLMMGLEEHLIGMFRHDFEFVDGHQSHLGHLGGLQSAQVEDAPAAIANNSTETHAIEADTSSVAVATATLEWTMDGEAELKKIPFFVRGKVRRNTEAFAKEKGLNQIDSETLYDAKAHYSA.

Residue Asp36 participates in [4Fe-4S] cluster binding. Asp290 acts as the Proton donor in catalysis. Substrate is bound at residue 425–426 (GL).

Belongs to the ChlB/BchB/BchZ family. As to quaternary structure, protochlorophyllide reductase is composed of three subunits; ChlL, ChlN and ChlB. Forms a heterotetramer of two ChlB and two ChlN subunits. The cofactor is [4Fe-4S] cluster.

The enzyme catalyses chlorophyllide a + oxidized 2[4Fe-4S]-[ferredoxin] + 2 ADP + 2 phosphate = protochlorophyllide a + reduced 2[4Fe-4S]-[ferredoxin] + 2 ATP + 2 H2O. Its pathway is porphyrin-containing compound metabolism; chlorophyll biosynthesis (light-independent). In terms of biological role, component of the dark-operative protochlorophyllide reductase (DPOR) that uses Mg-ATP and reduced ferredoxin to reduce ring D of protochlorophyllide (Pchlide) to form chlorophyllide a (Chlide). This reaction is light-independent. The NB-protein (ChlN-ChlB) is the catalytic component of the complex. The protein is Light-independent protochlorophyllide reductase subunit B of Synechococcus sp. (strain CC9902).